Here is a 396-residue protein sequence, read N- to C-terminus: Elongation factor Tu (396 aa).

Residues 10-206 (KPHVNVGTIG…TMDSYIPEPV (197 aa)) enclose the tr-type G domain. The interval 19–26 (GHVDHGKT) is G1. 19–26 (GHVDHGKT) is a binding site for GTP. Thr26 is a binding site for Mg(2+). Residues 60–64 (GITIS) are G2. Residues 81–84 (DCPG) are G3. Residues 81–85 (DCPGH) and 136–139 (NKAD) each bind GTP. The segment at 136–139 (NKAD) is G4. The segment at 174 to 176 (SAL) is G5.

The protein belongs to the TRAFAC class translation factor GTPase superfamily. Classic translation factor GTPase family. EF-Tu/EF-1A subfamily. As to quaternary structure, monomer.

It localises to the cytoplasm. It catalyses the reaction GTP + H2O = GDP + phosphate + H(+). Its function is as follows. GTP hydrolase that promotes the GTP-dependent binding of aminoacyl-tRNA to the A-site of ribosomes during protein biosynthesis. The chain is Elongation factor Tu from Legionella pneumophila (strain Lens).